The following is a 115-amino-acid chain: Double-headed protease inhibitor, submandibular gland (115 aa).

Kazal-like domains follow at residues 6–66 (IGRE…ACDI) and 67–115 (ECTE…HGEC). 6 disulfides stabilise this stretch: Cys-12–Cys-46, Cys-24–Cys-43, Cys-32–Cys-64, Cys-68–Cys-97, Cys-75–Cys-94, and Cys-83–Cys-115.

The protein localises to the secreted. Its function is as follows. This inhibitor is composed of two homologous actively inhibiting halves: one which inhibits trypsin, the other which inhibits elastase. The sequence is that of Double-headed protease inhibitor, submandibular gland from Vulpes vulpes (Red fox).